We begin with the raw amino-acid sequence, 332 residues long: Thiosulfate-binding protein (332 aa).

Positions 1–22 (MKRLFSASLLAAGLALGGAAHA) are cleaved as a signal peptide.

This sequence belongs to the prokaryotic sulfate-binding protein family.

The protein localises to the periplasm. Its function is as follows. Binds thiosulfate specifically and with high affinity. Has no detectable affinity for sulfate. This Pseudomonas aeruginosa (strain ATCC 15692 / DSM 22644 / CIP 104116 / JCM 14847 / LMG 12228 / 1C / PRS 101 / PAO1) protein is Thiosulfate-binding protein.